Reading from the N-terminus, the 67-residue chain is ATP synthase F(0) complex subunit 8 (67 aa).

A helical transmembrane segment spans residues 8-24 (TWFITILSMLITLFILF). An N6-acetyllysine; alternate modification is found at K54. K54 is subject to N6-succinyllysine; alternate. N6-acetyllysine is present on K57.

Belongs to the ATPase protein 8 family. Component of the ATP synthase complex composed at least of ATP5F1A/subunit alpha, ATP5F1B/subunit beta, ATP5MC1/subunit c (homooctomer), MT-ATP6/subunit a, MT-ATP8/subunit 8, ATP5ME/subunit e, ATP5MF/subunit f, ATP5MG/subunit g, ATP5MK/subunit k, ATP5MJ/subunit j, ATP5F1C/subunit gamma, ATP5F1D/subunit delta, ATP5F1E/subunit epsilon, ATP5PF/subunit F6, ATP5PB/subunit b, ATP5PD/subunit d, ATP5PO/subunit OSCP. ATP synthase complex consists of a soluble F(1) head domain (subunits alpha(3) and beta(3)) - the catalytic core - and a membrane F(0) domain - the membrane proton channel (subunits c, a, 8, e, f, g, k and j). These two domains are linked by a central stalk (subunits gamma, delta, and epsilon) rotating inside the F1 region and a stationary peripheral stalk (subunits F6, b, d, and OSCP). Interacts with PRICKLE3.

The protein localises to the mitochondrion membrane. Functionally, subunit 8, of the mitochondrial membrane ATP synthase complex (F(1)F(0) ATP synthase or Complex V) that produces ATP from ADP in the presence of a proton gradient across the membrane which is generated by electron transport complexes of the respiratory chain. ATP synthase complex consist of a soluble F(1) head domain - the catalytic core - and a membrane F(1) domain - the membrane proton channel. These two domains are linked by a central stalk rotating inside the F(1) region and a stationary peripheral stalk. During catalysis, ATP synthesis in the catalytic domain of F(1) is coupled via a rotary mechanism of the central stalk subunits to proton translocation. In vivo, can only synthesize ATP although its ATP hydrolase activity can be activated artificially in vitro. Part of the complex F(0) domain. This is ATP synthase F(0) complex subunit 8 from Dugong dugon (Dugong).